The chain runs to 153 residues: CRIB domain-containing protein RIC4 (153 aa).

In terms of domain architecture, CRIB spans 99–112 (IGVPTNVKHVSHIG).

Interacts with ARAC4/ROP2 and ARAC11/ROP1. As to expression, expressed in roots, leaves, stems, flowers, siliques and pollen.

It localises to the cell membrane. Functionally, functions as a downstream effector of Rho-related GTP binding proteins of the 'Rho of Plants' (ROPs) family. Participates in the propagation of ROP GTPase signals in specific cellular responses. Required for actin cortical microfilament assembly. Activated by ARAC4/ROP2 to promote the assembly of cortical actin microfilaments required for lobe formation and lateral expansion of pavement cells. Interaction with, and activation by ARAC4/ROP2 is inhibited by RIC1. Functions as a downstream effector of ARAC11/ROP1 to promote the assembly of apical F-actin associated with vesicle accumulation in the tip of the growing pollen tube. Counteracts the ARAC11/ROP1-RIC3 pathway, which activates calcium signaling that leads to apical F-actin disassembly associated with exocytosis, to control actin dynamics and pollen tube apical growth. Downstream of ARAC11/ROP1, is involved in the growth responses to the root-colonizing endophytic fungus P.indica. This chain is CRIB domain-containing protein RIC4 (RIC4), found in Arabidopsis thaliana (Mouse-ear cress).